Consider the following 695-residue polypeptide: F-box only protein 34 (695 aa).

Disordered stretches follow at residues 239–275, 316–373, and 472–524; these read GQSRGIPPAPEPFSAPETCEEPKEQENPETGRSQGEP, LTNG…CPSL, and GQDQ…PGGS. An F-box domain is found at 556-608; that stretch reads QQYMACLPHHIIVKIFRLLPTLSLAILKCTCRYFKSIIEYYNIRPADSRWVRD.

As to quaternary structure, directly interacts with SKP1 and CUL1.

Substrate-recognition component of the SCF (SKP1-CUL1-F-box protein)-type E3 ubiquitin ligase complex. The protein is F-box only protein 34 (Fbxo34) of Mus musculus (Mouse).